A 273-amino-acid chain; its full sequence is Glutamate racemase (273 aa).

Substrate contacts are provided by residues 9–10 (DS) and 41–42 (YG). The Proton donor/acceptor role is filled by cysteine 73. 74-75 (NT) lines the substrate pocket. The active-site Proton donor/acceptor is the cysteine 183. Position 184-185 (184-185 (TH)) interacts with substrate.

It belongs to the aspartate/glutamate racemases family.

It carries out the reaction L-glutamate = D-glutamate. The protein operates within cell wall biogenesis; peptidoglycan biosynthesis. Its function is as follows. Provides the (R)-glutamate required for cell wall biosynthesis. The chain is Glutamate racemase from Shewanella sp. (strain ANA-3).